The chain runs to 153 residues: UPF0311 protein RPA1785 (153 aa).

Belongs to the UPF0311 family.

The chain is UPF0311 protein RPA1785 from Rhodopseudomonas palustris (strain ATCC BAA-98 / CGA009).